A 486-amino-acid polypeptide reads, in one-letter code: Glutamyl-tRNA(Gln) amidotransferase subunit A (486 aa).

Active-site charge relay system residues include Lys-80 and Ser-155. The Acyl-ester intermediate role is filled by Ser-179.

It belongs to the amidase family. GatA subfamily. Heterotrimer of A, B and C subunits.

The enzyme catalyses L-glutamyl-tRNA(Gln) + L-glutamine + ATP + H2O = L-glutaminyl-tRNA(Gln) + L-glutamate + ADP + phosphate + H(+). In terms of biological role, allows the formation of correctly charged Gln-tRNA(Gln) through the transamidation of misacylated Glu-tRNA(Gln) in organisms which lack glutaminyl-tRNA synthetase. The reaction takes place in the presence of glutamine and ATP through an activated gamma-phospho-Glu-tRNA(Gln). The chain is Glutamyl-tRNA(Gln) amidotransferase subunit A from Geobacillus sp. (strain WCH70).